A 370-amino-acid chain; its full sequence is Dual-specificity RNA methyltransferase RlmN (370 aa).

Glutamate 93 serves as the catalytic Proton acceptor. Residues aspartate 99–aspartate 331 enclose the Radical SAM core domain. Residues cysteine 106 and cysteine 336 are joined by a disulfide bond. [4Fe-4S] cluster contacts are provided by cysteine 113, cysteine 117, and cysteine 120. S-adenosyl-L-methionine-binding positions include glycine 162–glutamate 163, serine 194, serine 216–histidine 218, and asparagine 293. Residue cysteine 336 is the S-methylcysteine intermediate of the active site.

The protein belongs to the radical SAM superfamily. RlmN family. Requires [4Fe-4S] cluster as cofactor.

It is found in the cytoplasm. The catalysed reaction is adenosine(2503) in 23S rRNA + 2 reduced [2Fe-2S]-[ferredoxin] + 2 S-adenosyl-L-methionine = 2-methyladenosine(2503) in 23S rRNA + 5'-deoxyadenosine + L-methionine + 2 oxidized [2Fe-2S]-[ferredoxin] + S-adenosyl-L-homocysteine. The enzyme catalyses adenosine(37) in tRNA + 2 reduced [2Fe-2S]-[ferredoxin] + 2 S-adenosyl-L-methionine = 2-methyladenosine(37) in tRNA + 5'-deoxyadenosine + L-methionine + 2 oxidized [2Fe-2S]-[ferredoxin] + S-adenosyl-L-homocysteine. Its function is as follows. Specifically methylates position 2 of adenine 2503 in 23S rRNA and position 2 of adenine 37 in tRNAs. m2A2503 modification seems to play a crucial role in the proofreading step occurring at the peptidyl transferase center and thus would serve to optimize ribosomal fidelity. The sequence is that of Dual-specificity RNA methyltransferase RlmN from Coxiella burnetii (strain RSA 493 / Nine Mile phase I).